Reading from the N-terminus, the 526-residue chain is GMP synthase [glutamine-hydrolyzing] (526 aa).

In terms of domain architecture, Glutamine amidotransferase type-1 spans 9-208 (RILILDFGSQ…LVNICGCKQL (200 aa)). The active-site Nucleophile is Cys-86. Active-site residues include His-182 and Glu-184. The 193-residue stretch at 209-401 (WTPGRIIEDA…LGLPYDMVYR (193 aa)) folds into the GMPS ATP-PPase domain. 236 to 242 (SGGVDSS) provides a ligand contact to ATP.

In terms of assembly, homodimer.

The catalysed reaction is XMP + L-glutamine + ATP + H2O = GMP + L-glutamate + AMP + diphosphate + 2 H(+). The protein operates within purine metabolism; GMP biosynthesis; GMP from XMP (L-Gln route): step 1/1. Its function is as follows. Catalyzes the synthesis of GMP from XMP. This is GMP synthase [glutamine-hydrolyzing] from Hahella chejuensis (strain KCTC 2396).